Here is a 432-residue protein sequence, read N- to C-terminus: Putative D-alanyl-D-alanine carboxypeptidase (432 aa).

A helical; Signal-anchor transmembrane segment spans residues 7–25 (ATVLLTFSLSAFAVEYPVL).

It belongs to the peptidase S12 family. YfeW subfamily.

It is found in the cell inner membrane. The enzyme catalyses Preferential cleavage: (Ac)2-L-Lys-D-Ala-|-D-Ala. Also transpeptidation of peptidyl-alanyl moieties that are N-acyl substituents of D-alanine.. This chain is Putative D-alanyl-D-alanine carboxypeptidase, found in Salmonella typhimurium (strain LT2 / SGSC1412 / ATCC 700720).